The chain runs to 1203 residues: Cingulin (1203 aa).

The segment at 7–357 is head; the sequence is MAEPRGPVDH…VMISSGSTKA (351 aa). Residues 25-48 form a disordered region; sequence EPVSGAEMGTLRRGGRRPAKDARA. A ZIM motif is present at residues 48–62; sequence ASTYGVAVRVQGIAG. Residues 54–67 are interaction with TJP1/ZO1; sequence AVRVQGIAGQPFVV. A disordered region spans residues 89 to 268; sequence EASGALGSDF…PPSGFSRSRQ (180 aa). Phosphoserine is present on residues Ser96, Ser135, Ser137, Ser140, Ser155, and Ser165. Residues 166–191 show a composition bias toward polar residues; that stretch reads PGSTIDTAPLSSVDSLINKFDSQLGG. Positions 207-231 are enriched in basic and acidic residues; it reads EQRKRSKSLDSRLPRDTLEERERQS. Ser214, Ser217, Ser258, Ser276, Ser338, and Ser351 each carry phosphoserine. Low complexity predominate over residues 246 to 267; it reads GSSKQPSQSQSPSPPSGFSRSR. Residues 358–1160 adopt a coiled-coil conformation; it reads VAGQGELTRK…SLEKDSWRKA (803 aa). Lys579 is modified (N6-acetyllysine). Residues 883-903 show a composition bias toward basic and acidic residues; the sequence is ARREVADAQRQAKDWASEAEK. Disordered regions lie at residues 883–908 and 1160–1181; these read ARRE…SGGL and ASRS…EEFD. The tail stretch occupies residues 1161-1203; it reads SRSAAESALKHEGLSSDEEFDSVYDPSSIASLLTESNLQTSSC. 3 positions are modified to phosphoserine: Ser1175, Ser1176, and Ser1182.

The protein belongs to the cingulin family. As to quaternary structure, homodimer. Interacts with TJP1/ZO1 and SPEF1.

The protein localises to the cell junction. Its subcellular location is the tight junction. In terms of biological role, probably plays a role in the formation and regulation of the tight junction (TJ) paracellular permeability barrier. The protein is Cingulin of Papio anubis (Olive baboon).